A 462-amino-acid polypeptide reads, in one-letter code: MSNLKLWEGRFSKSTAQIFDLFNASIMTDIKLFEYDILGSVAHVKMLAKCNIIREDEAKLIIDSLYQILEDFKLGKIVFGISDEDVHMLIEKELIKRIGEVGKKVHTARSRNDQVALDERLFCREKNLYLQELIKTLINTITTLAEENIDVIMPGFTHLQKAQPILFSHYILAYAQMLKRDLLRLRHNYSMTNSSPLGSAALAGTTFEIDRFFVASELGFESVTENSVDTVSDRDFILEMLFSLAMIQMHLSRLAEDFIIFNTDEFKFIELDDSFCSGSSIMPQKKNPDALELIRGKTGRVYADLIGLLTVLKGLPLSYNKDLQEDKEFLFDSIETVEMSLIVINEILKTLKIDKENMVNSCKSGFINATDLADYLVTKGVPFRDAHFIVGNIVKYCIESDKTLEDLSLEEYKRFCEKIQEDVYQFIKIETCVNRRKSYGGTSLESVRKQIDNLKEFLNKLK.

Belongs to the lyase 1 family. Argininosuccinate lyase subfamily.

Its subcellular location is the cytoplasm. It carries out the reaction 2-(N(omega)-L-arginino)succinate = fumarate + L-arginine. The protein operates within amino-acid biosynthesis; L-arginine biosynthesis; L-arginine from L-ornithine and carbamoyl phosphate: step 3/3. This Caldicellulosiruptor bescii (strain ATCC BAA-1888 / DSM 6725 / KCTC 15123 / Z-1320) (Anaerocellum thermophilum) protein is Argininosuccinate lyase.